Consider the following 174-residue polypeptide: Large ribosomal subunit protein uL5 (174 aa).

This sequence belongs to the universal ribosomal protein uL5 family. As to quaternary structure, part of the 50S ribosomal subunit; contacts the 5S rRNA and probably tRNA. Forms a bridge to the 30S subunit in the 70S ribosome.

In terms of biological role, this is one of the proteins that bind and probably mediate the attachment of the 5S RNA into the large ribosomal subunit, where it forms part of the central protuberance. In the 70S ribosome it contacts protein S13 of the 30S subunit (bridge B1b), connecting the 2 subunits; this bridge is implicated in subunit movement. May contact the P site tRNA; the 5S rRNA and some of its associated proteins might help stabilize positioning of ribosome-bound tRNAs. This Halorubrum lacusprofundi (strain ATCC 49239 / DSM 5036 / JCM 8891 / ACAM 34) protein is Large ribosomal subunit protein uL5.